We begin with the raw amino-acid sequence, 110 residues long: MVKGRHSKRKGNFHIILRNASLLQRQKLDKSRSTGSLLESRRQPCVLLSFAKLFLLCIVFSPKLDYTKKKTKILKLHQSFGTATILTIFHLHGSRSVAAQNFILFHDYLH.

This is an uncharacterized protein from Saccharomyces cerevisiae (strain ATCC 204508 / S288c) (Baker's yeast).